Reading from the N-terminus, the 208-residue chain is Large ribosomal subunit protein uL4 (208 aa).

Positions 45–78 (RQGTAKSKERSEMSGSTRKLGRQKGSGGARRGDI) are disordered.

Belongs to the universal ribosomal protein uL4 family. In terms of assembly, part of the 50S ribosomal subunit.

In terms of biological role, one of the primary rRNA binding proteins, this protein initially binds near the 5'-end of the 23S rRNA. It is important during the early stages of 50S assembly. It makes multiple contacts with different domains of the 23S rRNA in the assembled 50S subunit and ribosome. Its function is as follows. Forms part of the polypeptide exit tunnel. The chain is Large ribosomal subunit protein uL4 from Azobacteroides pseudotrichonymphae genomovar. CFP2.